A 274-amino-acid chain; its full sequence is Diaminopimelate epimerase (274 aa).

Positions 13, 45, and 63 each coordinate substrate. Catalysis depends on cysteine 72, which acts as the Proton donor. Substrate is bound by residues 73–74, asparagine 158, asparagine 191, and 209–210; these read GN and ER. Cysteine 218 functions as the Proton acceptor in the catalytic mechanism. 219-220 contacts substrate; it reads GT.

It belongs to the diaminopimelate epimerase family. As to quaternary structure, homodimer.

Its subcellular location is the cytoplasm. It carries out the reaction (2S,6S)-2,6-diaminopimelate = meso-2,6-diaminopimelate. Its pathway is amino-acid biosynthesis; L-lysine biosynthesis via DAP pathway; DL-2,6-diaminopimelate from LL-2,6-diaminopimelate: step 1/1. Functionally, catalyzes the stereoinversion of LL-2,6-diaminopimelate (L,L-DAP) to meso-diaminopimelate (meso-DAP), a precursor of L-lysine and an essential component of the bacterial peptidoglycan. In Pelagibacter ubique (strain HTCC1062), this protein is Diaminopimelate epimerase.